We begin with the raw amino-acid sequence, 346 residues long: Probable dual-specificity RNA methyltransferase RlmN (346 aa).

The active-site Proton acceptor is the Glu91. One can recognise a Radical SAM core domain in the interval Thr97 to Glu325. Cysteines 104 and 330 form a disulfide. Residues Cys111, Cys115, and Cys118 each contribute to the [4Fe-4S] cluster site. S-adenosyl-L-methionine contacts are provided by residues Gly158 to Glu159, Ser188, Ser211 to His213, and Asn287. Catalysis depends on Cys330, which acts as the S-methylcysteine intermediate.

This sequence belongs to the radical SAM superfamily. RlmN family. The cofactor is [4Fe-4S] cluster.

It is found in the cytoplasm. It catalyses the reaction adenosine(2503) in 23S rRNA + 2 reduced [2Fe-2S]-[ferredoxin] + 2 S-adenosyl-L-methionine = 2-methyladenosine(2503) in 23S rRNA + 5'-deoxyadenosine + L-methionine + 2 oxidized [2Fe-2S]-[ferredoxin] + S-adenosyl-L-homocysteine. The catalysed reaction is adenosine(37) in tRNA + 2 reduced [2Fe-2S]-[ferredoxin] + 2 S-adenosyl-L-methionine = 2-methyladenosine(37) in tRNA + 5'-deoxyadenosine + L-methionine + 2 oxidized [2Fe-2S]-[ferredoxin] + S-adenosyl-L-homocysteine. In terms of biological role, specifically methylates position 2 of adenine 2503 in 23S rRNA and position 2 of adenine 37 in tRNAs. The polypeptide is Probable dual-specificity RNA methyltransferase RlmN (Picosynechococcus sp. (strain ATCC 27264 / PCC 7002 / PR-6) (Agmenellum quadruplicatum)).